A 914-amino-acid polypeptide reads, in one-letter code: DNA mismatch repair protein MutS (914 aa).

The tract at residues M1–E24 is disordered. Polar residues predominate over residues K8–S18. G662–S669 contacts ATP.

The protein belongs to the DNA mismatch repair MutS family.

This protein is involved in the repair of mismatches in DNA. It is possible that it carries out the mismatch recognition step. This protein has a weak ATPase activity. The protein is DNA mismatch repair protein MutS of Bartonella henselae (strain ATCC 49882 / DSM 28221 / CCUG 30454 / Houston 1) (Rochalimaea henselae).